Here is a 159-residue protein sequence, read N- to C-terminus: Transcription elongation factor GreA (159 aa).

A coiled-coil region spans residues Thr3–Lys37.

The protein belongs to the GreA/GreB family.

Its function is as follows. Necessary for efficient RNA polymerase transcription elongation past template-encoded arresting sites. The arresting sites in DNA have the property of trapping a certain fraction of elongating RNA polymerases that pass through, resulting in locked ternary complexes. Cleavage of the nascent transcript by cleavage factors such as GreA or GreB allows the resumption of elongation from the new 3'terminus. GreA releases sequences of 2 to 3 nucleotides. In Acetivibrio thermocellus (strain ATCC 27405 / DSM 1237 / JCM 9322 / NBRC 103400 / NCIMB 10682 / NRRL B-4536 / VPI 7372) (Clostridium thermocellum), this protein is Transcription elongation factor GreA.